The chain runs to 71 residues: Large ribosomal subunit protein bL31 (71 aa).

Zn(2+) contacts are provided by Cys-16, Cys-18, Cys-37, and Cys-40.

The protein belongs to the bacterial ribosomal protein bL31 family. Type A subfamily. Part of the 50S ribosomal subunit. The cofactor is Zn(2+).

Its function is as follows. Binds the 23S rRNA. This Serratia proteamaculans (strain 568) protein is Large ribosomal subunit protein bL31.